A 518-amino-acid polypeptide reads, in one-letter code: OTU domain-containing protein 5 (518 aa).

Disordered regions lie at residues 1–79 (MTIL…SGGA) and 105–144 (PGHS…ETAA). Pro residues predominate over residues 39–53 (SSPPPRWAYPGNPAP). Residues 116-125 (SAGPGAPGSS) are compositionally biased toward low complexity. The region spanning 171-294 (FIIKQMKEDG…NIHYNSVVNP (124 aa)) is the OTU domain. Residues 176 to 182 (MKEDGAC) form a cys-loop region. Residue Asp-179 is part of the active site. Cys-182 (nucleophile) is an active-site residue. Positions 231-241 (KRKNNCHGNHI) are variable-loop. A his-loop region spans residues 282–287 (YHRNIH). His-287 is a catalytic residue. The interval 371-450 (ARQPRKASAT…GPSNQTCAGA (80 aa)) is disordered. The segment covering 377-390 (ASATCSSATAAASS) has biased composition (low complexity).

Belongs to the peptidase C85 family.

The catalysed reaction is Thiol-dependent hydrolysis of ester, thioester, amide, peptide and isopeptide bonds formed by the C-terminal Gly of ubiquitin (a 76-residue protein attached to proteins as an intracellular targeting signal).. In terms of biological role, deubiquitinating enzyme that may function as negative regulator of the innate immune system. Has peptidase activity towards 'Lys-48'- and 'Lys-63'-linked polyubiquitin chains. Can also cleave 'Lys-11'-linked ubiquitin chains (in vitro). The protein is OTU domain-containing protein 5 (otud5) of Xenopus tropicalis (Western clawed frog).